The sequence spans 121 residues: Two-component response regulator ORR13 (121 aa).

In terms of domain architecture, Response regulatory spans 5–121 (HVLVVDDTHV…ADVPRILNYI (117 aa)). A 4-aspartylphosphate modification is found at D55.

The protein belongs to the ARR family. Type-A subfamily. Post-translationally, two-component system major event consists of a His-to-Asp phosphorelay between a sensor histidine kinase (HK) and a response regulator (RR). In plants, the His-to-Asp phosphorelay involves an additional intermediate named Histidine-containing phosphotransfer protein (HPt). This multistep phosphorelay consists of a His-Asp-His-Asp sequential transfer of a phosphate group between first a His and an Asp of the HK protein, followed by the transfer to a conserved His of the HPt protein and finally the transfer to an Asp in the receiver domain of the RR protein. As to expression, expressed in flowers and panicles.

Its function is as follows. Functions as a response regulator involved in His-to-Asp phosphorelay signal transduction system. Phosphorylation of the Asp residue in the receiver domain activates the ability of the protein to promote the transcription of target genes. Type-A response regulators seem to act as negative regulators of the cytokinin signaling. This Oryza sativa subsp. japonica (Rice) protein is Two-component response regulator ORR13.